Consider the following 333-residue polypeptide: Acetyltransferase Pat (333 aa).

3',5'-cyclic AMP contacts are provided by residues 85–88 (GEIA), 95–96 (RT), and Arg135. Positions 153-317 (FYLRPVLPGD…DTVPFEPELI (165 aa)) constitute an N-acetyltransferase domain. Glu211 is a binding site for Mg(2+). Substrate-binding positions include 237 to 239 (FTV), 245 to 250 (GRGIGS), Asn276, and Arg285.

In terms of assembly, homodimer. Mg(2+) is required as a cofactor.

Its activity is regulated as follows. Allosterically regulated by cAMP. In terms of biological role, catalyzes specifically the acetylation of the epsilon-amino group of a highly conserved lysine residue in acetyl-CoA synthetase (ACS) and of the universal stress protein (USP) MSMEG_4207. Acetylation results in the inactivation of ACS activity and could be important for mycobacteria to adjust to environmental changes. The protein is Acetyltransferase Pat of Mycolicibacterium smegmatis (strain ATCC 700084 / mc(2)155) (Mycobacterium smegmatis).